Consider the following 331-residue polypeptide: tRNA N6-adenosine threonylcarbamoyltransferase (331 aa).

A divalent metal cation contacts are provided by histidine 108, histidine 112, and tyrosine 129. Residues tyrosine 129–glycine 133, aspartate 161, glycine 176, glutamate 180, and asparagine 261 each bind substrate. Aspartate 289 serves as a coordination point for a divalent metal cation.

This sequence belongs to the KAE1 / TsaD family. In terms of assembly, component of the EKC/KEOPS complex composed of at least BUD32, CGI121, GON7, KAE1 and PCC1; the whole complex dimerizes. It depends on a divalent metal cation as a cofactor.

The protein localises to the cytoplasm. It is found in the nucleus. It catalyses the reaction L-threonylcarbamoyladenylate + adenosine(37) in tRNA = N(6)-L-threonylcarbamoyladenosine(37) in tRNA + AMP + H(+). In terms of biological role, component of the EKC/KEOPS complex that is required for the formation of a threonylcarbamoyl group on adenosine at position 37 (t(6)A37) in tRNAs that read codons beginning with adenine. The complex is probably involved in the transfer of the threonylcarbamoyl moiety of threonylcarbamoyl-AMP (TC-AMP) to the N6 group of A37. KAE1 likely plays a direct catalytic role in this reaction, but requires other protein(s) of the complex to fulfill this activity. The EKC/KEOPS complex also promotes both telomere uncapping and telomere elongation. The complex is required for efficient recruitment of transcriptional coactivators. This is tRNA N6-adenosine threonylcarbamoyltransferase from Encephalitozoon cuniculi (strain GB-M1) (Microsporidian parasite).